The chain runs to 258 residues: Ubiquinone/menaquinone biosynthesis C-methyltransferase UbiE (258 aa).

S-adenosyl-L-methionine-binding positions include Thr81, Asp102, and 130 to 131; that span reads NA.

Belongs to the class I-like SAM-binding methyltransferase superfamily. MenG/UbiE family.

The enzyme catalyses a 2-demethylmenaquinol + S-adenosyl-L-methionine = a menaquinol + S-adenosyl-L-homocysteine + H(+). The catalysed reaction is a 2-methoxy-6-(all-trans-polyprenyl)benzene-1,4-diol + S-adenosyl-L-methionine = a 5-methoxy-2-methyl-3-(all-trans-polyprenyl)benzene-1,4-diol + S-adenosyl-L-homocysteine + H(+). Its pathway is quinol/quinone metabolism; menaquinone biosynthesis; menaquinol from 1,4-dihydroxy-2-naphthoate: step 2/2. It participates in cofactor biosynthesis; ubiquinone biosynthesis. Functionally, methyltransferase required for the conversion of demethylmenaquinol (DMKH2) to menaquinol (MKH2) and the conversion of 2-polyprenyl-6-methoxy-1,4-benzoquinol (DDMQH2) to 2-polyprenyl-3-methyl-6-methoxy-1,4-benzoquinol (DMQH2). The sequence is that of Ubiquinone/menaquinone biosynthesis C-methyltransferase UbiE from Sinorhizobium fredii (strain NBRC 101917 / NGR234).